We begin with the raw amino-acid sequence, 331 residues long: 4-hydroxy-3-methylbut-2-enyl diphosphate reductase (331 aa).

Position 12 (Cys12) interacts with [4Fe-4S] cluster. (2E)-4-hydroxy-3-methylbut-2-enyl diphosphate-binding residues include His43 and His81. His43 and His81 together coordinate dimethylallyl diphosphate. His43 and His81 together coordinate isopentenyl diphosphate. Residue Cys103 coordinates [4Fe-4S] cluster. His131 lines the (2E)-4-hydroxy-3-methylbut-2-enyl diphosphate pocket. Residue His131 participates in dimethylallyl diphosphate binding. Residue His131 participates in isopentenyl diphosphate binding. Glu133 (proton donor) is an active-site residue. Thr170 provides a ligand contact to (2E)-4-hydroxy-3-methylbut-2-enyl diphosphate. Cys198 is a binding site for [4Fe-4S] cluster. (2E)-4-hydroxy-3-methylbut-2-enyl diphosphate is bound by residues Ser226, Asn228, and Ser271. Positions 226, 228, and 271 each coordinate dimethylallyl diphosphate. Residues Ser226, Asn228, and Ser271 each coordinate isopentenyl diphosphate.

The protein belongs to the IspH family. [4Fe-4S] cluster is required as a cofactor.

It carries out the reaction isopentenyl diphosphate + 2 oxidized [2Fe-2S]-[ferredoxin] + H2O = (2E)-4-hydroxy-3-methylbut-2-enyl diphosphate + 2 reduced [2Fe-2S]-[ferredoxin] + 2 H(+). The enzyme catalyses dimethylallyl diphosphate + 2 oxidized [2Fe-2S]-[ferredoxin] + H2O = (2E)-4-hydroxy-3-methylbut-2-enyl diphosphate + 2 reduced [2Fe-2S]-[ferredoxin] + 2 H(+). It functions in the pathway isoprenoid biosynthesis; dimethylallyl diphosphate biosynthesis; dimethylallyl diphosphate from (2E)-4-hydroxy-3-methylbutenyl diphosphate: step 1/1. The protein operates within isoprenoid biosynthesis; isopentenyl diphosphate biosynthesis via DXP pathway; isopentenyl diphosphate from 1-deoxy-D-xylulose 5-phosphate: step 6/6. In terms of biological role, catalyzes the conversion of 1-hydroxy-2-methyl-2-(E)-butenyl 4-diphosphate (HMBPP) into a mixture of isopentenyl diphosphate (IPP) and dimethylallyl diphosphate (DMAPP). Acts in the terminal step of the DOXP/MEP pathway for isoprenoid precursor biosynthesis. This chain is 4-hydroxy-3-methylbut-2-enyl diphosphate reductase, found in Listeria monocytogenes serotype 4b (strain CLIP80459).